We begin with the raw amino-acid sequence, 213 residues long: Cytokinin riboside 5'-monophosphate phosphoribohydrolase LOG2 (213 aa).

Residues Glu-79, 97–98 (RK), 114–120 (GYGTFEE), and Thr-126 contribute to the substrate site.

It belongs to the LOG family. As to expression, expressed in roots and shoots. Detected in root hairs.

It localises to the cytoplasm. It is found in the nucleus. It carries out the reaction N(6)-(dimethylallyl)adenosine 5'-phosphate + H2O = N(6)-dimethylallyladenine + D-ribose 5-phosphate. The enzyme catalyses 9-ribosyl-trans-zeatin 5'-phosphate + H2O = trans-zeatin + D-ribose 5-phosphate. Its function is as follows. Cytokinin-activating enzyme working in the direct activation pathway. Phosphoribohydrolase that converts inactive cytokinin nucleotides to the biologically active free-base forms. The chain is Cytokinin riboside 5'-monophosphate phosphoribohydrolase LOG2 (LOG2) from Arabidopsis thaliana (Mouse-ear cress).